A 283-amino-acid polypeptide reads, in one-letter code: Light-independent protochlorophyllide reductase iron-sulfur ATP-binding protein (283 aa).

ATP-binding positions include 15–20 and Lys44; that span reads GIGKST. Residue Ser19 coordinates Mg(2+). The [4Fe-4S] cluster site is built by Cys100 and Cys134. 185 to 186 provides a ligand contact to ATP; that stretch reads NR.

Belongs to the NifH/BchL/ChlL family. In terms of assembly, homodimer. Protochlorophyllide reductase is composed of three subunits; ChlL, ChlN and ChlB. The cofactor is [4Fe-4S] cluster.

The enzyme catalyses chlorophyllide a + oxidized 2[4Fe-4S]-[ferredoxin] + 2 ADP + 2 phosphate = protochlorophyllide a + reduced 2[4Fe-4S]-[ferredoxin] + 2 ATP + 2 H2O. It participates in porphyrin-containing compound metabolism; chlorophyll biosynthesis (light-independent). In terms of biological role, component of the dark-operative protochlorophyllide reductase (DPOR) that uses Mg-ATP and reduced ferredoxin to reduce ring D of protochlorophyllide (Pchlide) to form chlorophyllide a (Chlide). This reaction is light-independent. The L component serves as a unique electron donor to the NB-component of the complex, and binds Mg-ATP. This chain is Light-independent protochlorophyllide reductase iron-sulfur ATP-binding protein, found in Synechococcus sp. (strain JA-3-3Ab) (Cyanobacteria bacterium Yellowstone A-Prime).